We begin with the raw amino-acid sequence, 209 residues long: Peptide methionine sulfoxide reductase MsrA (209 aa).

The active site involves cysteine 14. The tract at residues 183-209 (FSALTTGGNQPGARGGLTNNTCQHPRH) is disordered. Over residues 199–209 (LTNNTCQHPRH) the composition is skewed to polar residues.

It belongs to the MsrA Met sulfoxide reductase family.

The enzyme catalyses L-methionyl-[protein] + [thioredoxin]-disulfide + H2O = L-methionyl-(S)-S-oxide-[protein] + [thioredoxin]-dithiol. The catalysed reaction is [thioredoxin]-disulfide + L-methionine + H2O = L-methionine (S)-S-oxide + [thioredoxin]-dithiol. Has an important function as a repair enzyme for proteins that have been inactivated by oxidation. Catalyzes the reversible oxidation-reduction of methionine sulfoxide in proteins to methionine. The protein is Peptide methionine sulfoxide reductase MsrA of Pseudomonas fluorescens.